The sequence spans 393 residues: Anhydro-N-acetylmuramic acid kinase (393 aa).

Position 9 to 16 (9 to 16 (GTSADGVD)) interacts with ATP.

The protein belongs to the anhydro-N-acetylmuramic acid kinase family.

The enzyme catalyses 1,6-anhydro-N-acetyl-beta-muramate + ATP + H2O = N-acetyl-D-muramate 6-phosphate + ADP + H(+). Its pathway is amino-sugar metabolism; 1,6-anhydro-N-acetylmuramate degradation. The protein operates within cell wall biogenesis; peptidoglycan recycling. In terms of biological role, catalyzes the specific phosphorylation of 1,6-anhydro-N-acetylmuramic acid (anhMurNAc) with the simultaneous cleavage of the 1,6-anhydro ring, generating MurNAc-6-P. Is required for the utilization of anhMurNAc either imported from the medium or derived from its own cell wall murein, and thus plays a role in cell wall recycling. The polypeptide is Anhydro-N-acetylmuramic acid kinase (Acidithiobacillus ferrooxidans (strain ATCC 23270 / DSM 14882 / CIP 104768 / NCIMB 8455) (Ferrobacillus ferrooxidans (strain ATCC 23270))).